The chain runs to 71 residues: IRCFITPDITSKDCPNGHVCYTKTWCDAFCSIRGKRVDLGCAATCPTVKTGVDIQCCSTDNCNPFPTRKRP.

5 disulfide bridges follow: Cys3/Cys20, Cys14/Cys41, Cys26/Cys30, Cys45/Cys56, and Cys57/Cys62.

It belongs to the three-finger toxin family. Long-chain subfamily. Type II alpha-neurotoxin sub-subfamily. Monomer, homo- or heterodimer with cytotoxins 1 (P60305), 2 (AC P01445), and 3 (AC P01446); disulfide-linked. In homodimer alpha-cobratoxin, selective reduction of Cys(26)-Cys(30) in one subunit does not affect the activity against the alpha-7/CHRNA7 nAChR, whereas its reduction in both subunits almost prevents alpha-7/CHRNA7 nAChR recognition. On the contrary, reduction of one or both Cys(26)-Cys(30) disulfide bonds in the homodimer considerably potentiates inhibition of the alpha-3-beta-2/CHRNA3-CHRNB2 nAChR by the toxin. Expressed by the venom gland.

It is found in the secreted. Monomer: binds with high affinity to muscular (alpha-1-beta-1-gamma-delta/CHRNA1-CHRNB1-CHRNG-CHRND) nAChR (tested on Torpedo californica, Kd=0.2-4.5 nM) and neuronal alpha-7/CHRNA7 nicotinic acetylcholine receptors (Kd=13-105 nM). Also inhibits GABA(A) channels. Heteropentamer targets studied are composed of alpha-1-beta-3-gamma-2 (GABRA1-GABRB3-GABRG2) subunits (IC(50)=236 nM), alpha-1-beta-2-gamma-2 (GABRA1-GABRB2-GABRG2) subunits (IC(50)=469 nM), alpha-2-beta-2-gamma-2 (GABRA2-GABRB2-GABRG2) subunits (IC(50)=485 nM), alpha-5-beta-3-gamma-2 (GABRA5-GABRB3-GABRG2) subunits (IC(50)=635 nM), and alpha-2-beta-3-gamma-2 (GABRA2-GABRB3-GABRG2) subunits (IC(50)=1099 nM) (activated by 10 uM GABA). In terms of biological role, homodimer: binds with high affinity (but lower than the monomeric form) to muscular (IC(50)=9.7 nM) and with low affinity to neuronal alpha-7/CHRNA7 nAChRs (IC(50)=1370 nM). However, it acquires (compared to the monomeric form) the capacity to block alpha-3/beta-2 (CHRNA3/CHRNB2) nAChRs. Its function is as follows. Heterodimer with cytotoxin 3 (AC P01446): is slightly more active than the homodimer in inhibiting alpha-7/CHRNA7 nAChR and is considerably more active in blocking the alpha-3-beta-2/CHRNA3-CHRNB2 nAChR. In Naja kaouthia (Monocled cobra), this protein is Alpha-cobratoxin.